Consider the following 357-residue polypeptide: Neutral protease 2 homolog BDCG_00922 (357 aa).

The signal sequence occupies residues 1 to 19 (MRSPQSILAIVAFATTAIA). Positions 20–182 (GVVPSTEKRA…FASLNQFSKR (163 aa)) are excised as a propeptide. 3 disulfides stabilise this stretch: Cys-188–Cys-259, Cys-266–Cys-284, and Cys-297–Cys-357. His-308 serves as a coordination point for Zn(2+). Glu-309 is a catalytic residue. Zn(2+)-binding residues include His-312 and Asp-323.

It belongs to the peptidase M35 family. Zn(2+) serves as cofactor.

Its subcellular location is the secreted. The catalysed reaction is Preferential cleavage of bonds with hydrophobic residues in P1'. Also 3-Asn-|-Gln-4 and 8-Gly-|-Ser-9 bonds in insulin B chain.. In terms of biological role, secreted metalloproteinase that allows assimilation of proteinaceous substrates. Shows high activities on basic nuclear substrates such as histone and protamine. The polypeptide is Neutral protease 2 homolog BDCG_00922 (Ajellomyces dermatitidis (strain ER-3 / ATCC MYA-2586) (Blastomyces dermatitidis)).